We begin with the raw amino-acid sequence, 553 residues long: Dihydroxy-acid dehydratase (553 aa).

Aspartate 78 provides a ligand contact to Mg(2+). Cysteine 119 contacts [2Fe-2S] cluster. Positions 120 and 121 each coordinate Mg(2+). An N6-carboxylysine modification is found at lysine 121. Cysteine 191 serves as a coordination point for [2Fe-2S] cluster. Position 442 (glutamate 442) interacts with Mg(2+). The Proton acceptor role is filled by serine 468.

The protein belongs to the IlvD/Edd family. Homodimer. The cofactor is [2Fe-2S] cluster. Requires Mg(2+) as cofactor.

It carries out the reaction (2R)-2,3-dihydroxy-3-methylbutanoate = 3-methyl-2-oxobutanoate + H2O. The enzyme catalyses (2R,3R)-2,3-dihydroxy-3-methylpentanoate = (S)-3-methyl-2-oxopentanoate + H2O. It functions in the pathway amino-acid biosynthesis; L-isoleucine biosynthesis; L-isoleucine from 2-oxobutanoate: step 3/4. The protein operates within amino-acid biosynthesis; L-valine biosynthesis; L-valine from pyruvate: step 3/4. In terms of biological role, functions in the biosynthesis of branched-chain amino acids. Catalyzes the dehydration of (2R,3R)-2,3-dihydroxy-3-methylpentanoate (2,3-dihydroxy-3-methylvalerate) into 2-oxo-3-methylpentanoate (2-oxo-3-methylvalerate) and of (2R)-2,3-dihydroxy-3-methylbutanoate (2,3-dihydroxyisovalerate) into 2-oxo-3-methylbutanoate (2-oxoisovalerate), the penultimate precursor to L-isoleucine and L-valine, respectively. This is Dihydroxy-acid dehydratase from Carboxydothermus hydrogenoformans (strain ATCC BAA-161 / DSM 6008 / Z-2901).